A 78-amino-acid polypeptide reads, in one-letter code: Defensin-like protein 90 (78 aa).

The N-terminal stretch at 1-25 is a signal peptide; that stretch reads MTTKMFSYVLLHSLMMFAIILSSMG. Disulfide bonds link Cys-33–Cys-70, Cys-38–Cys-59, Cys-44–Cys-68, and Cys-48–Cys-69.

The protein belongs to the DEFL family.

Its subcellular location is the secreted. In Arabidopsis thaliana (Mouse-ear cress), this protein is Defensin-like protein 90.